A 493-amino-acid chain; its full sequence is Cytochrome P450 2E1 (493 aa).

298-303 (FAGTET) is a binding site for substrate. Cys437 lines the heme pocket.

This sequence belongs to the cytochrome P450 family. Interacts with chaperones HSP70 and HSP90; this interaction is required for initial targeting to mitochondria. Heme is required as a cofactor.

It localises to the endoplasmic reticulum membrane. Its subcellular location is the microsome membrane. The protein localises to the mitochondrion inner membrane. It carries out the reaction an organic molecule + reduced [NADPH--hemoprotein reductase] + O2 = an alcohol + oxidized [NADPH--hemoprotein reductase] + H2O + H(+). The enzyme catalyses (5Z,8Z,11Z)-eicosatrienoate + reduced [NADPH--hemoprotein reductase] + O2 = 19-hydroxy-(5Z,8Z,11Z)-eicosatrienoate + oxidized [NADPH--hemoprotein reductase] + H2O + H(+). The catalysed reaction is (5Z,8Z,11Z,14Z,17Z)-eicosapentaenoate + reduced [NADPH--hemoprotein reductase] + O2 = 19-hydroxy-(5Z,8Z,11Z,14Z,17Z)-eicosapentaenoate + oxidized [NADPH--hemoprotein reductase] + H2O + H(+). It catalyses the reaction (4Z,7Z,10Z,13Z,16Z,19Z)-docosahexaenoate + reduced [NADPH--hemoprotein reductase] + O2 = 21-hydroxy-(4Z,7Z,10Z,13Z,16Z,19Z)-docosahexaenoate + oxidized [NADPH--hemoprotein reductase] + H2O + H(+). It carries out the reaction dodecanoate + reduced [NADPH--hemoprotein reductase] + O2 = 11-hydroxydodecanoate + oxidized [NADPH--hemoprotein reductase] + H2O + H(+). The enzyme catalyses tetradecanoate + reduced [NADPH--hemoprotein reductase] + O2 = 13-hydroxytetradecanoate + oxidized [NADPH--hemoprotein reductase] + H2O + H(+). The catalysed reaction is 4-nitrophenol + NADPH + O2 + H(+) = 4-nitrocatechol + NADP(+) + H2O. It participates in lipid metabolism; fatty acid metabolism. The omega-1 hydroxylase activity is stimulated by cytochrome b5. Functionally, a cytochrome P450 monooxygenase involved in the metabolism of fatty acids. Mechanistically, uses molecular oxygen inserting one oxygen atom into a substrate, and reducing the second into a water molecule, with two electrons provided by NADPH via cytochrome P450 reductase (NADPH--hemoprotein reductase). Catalyzes the hydroxylation of carbon-hydrogen bonds. Hydroxylates fatty acids specifically at the omega-1 position displaying the highest catalytic activity for saturated fatty acids. May be involved in the oxidative metabolism of xenobiotics. This chain is Cytochrome P450 2E1 (CYP2E1), found in Mesocricetus auratus (Golden hamster).